The following is a 510-amino-acid chain: MERLNRNRSYQEELNFIEKINDYSYRIKLGFVPNMKVEGLFYADLPLEHLMFEELQHFCSCNGVGGFLPGVKQIGNVAALPGIVGKSIGLPDIHSGYGFAIGNIAAFDVANPKAIVSPGGVGFDINCGVRLIRTNLHERDVNPMKETLAQSLFDHIPVGVGSRGIIPMNARDLDEALEMGMDWSLREGYAWAEDKEHCEEYGRMLQADSNKISLRAKKRGLPQLGTLGAGNHYAEIQAVDEIYDSFAAKSMGINRRGQICIMVHSGSRGLGHQVATDALFNMEKAMIKDGINVNDRQLACARIASDEGQNYLKGMAAAANYAWVNRSSMTFLARQAFAKCFHTTPDDLDMHVIYDVSHNIAKIEEHVVNGKLSTLLVHRKGSTRAFPPHHPLIPVDYQLTGQPVLIGGTMGTCSFVMTGTSQGMSETYGTTCHGAGRALSRAKARRSLNYQEVLDRLNASGISIRVASPKLVMEEAPESYKDVTNVVETCHLAGISKKCFKLRPIAVIKG.

The Mn(2+) site is built by D124, C127, H232, H264, and H358. 231-235 (NHYAE) serves as a coordination point for GMP. Residues 358–359 (HN), 407–410 (GGTM), S414, 433–436 (HGAG), and K509 each bind GMP. The GMP-histidine intermediate role is filled by H433.

Belongs to the RtcB family. Catalytic component of the tRNA-splicing ligase complex. It depends on Mn(2+) as a cofactor.

It catalyses the reaction a 3'-end 3'-phospho-ribonucleotide-RNA + a 5'-end dephospho-ribonucleoside-RNA + GTP = a ribonucleotidyl-ribonucleotide-RNA + GMP + diphosphate. It carries out the reaction a 3'-end 2',3'-cyclophospho-ribonucleotide-RNA + a 5'-end dephospho-ribonucleoside-RNA + GTP + H2O = a ribonucleotidyl-ribonucleotide-RNA + GMP + diphosphate + H(+). In terms of biological role, catalytic subunit of the tRNA-splicing ligase complex that acts by directly joining spliced tRNA halves to mature-sized tRNAs by incorporating the precursor-derived splice junction phosphate into the mature tRNA as a canonical 3',5'-phosphodiester. May act as an RNA ligase with broad substrate specificity, and may function toward other RNAs. The polypeptide is RNA-splicing ligase RtcB homolog (Trichoplax adhaerens (Trichoplax reptans)).